A 295-amino-acid chain; its full sequence is MAHQLLCCEMETIRRAYPDANLLNDRVLRAMLKAEETCAPSVSYFKCVQKEILPSMRKIVATWMLEVCEEQKCEEEVFPLAMNYLDRFLSLEPVKKSRLQLLGATCMFVASKMKETIPLTAEKLCIYTDNSIRPDELLHMELVLVNKLKWNLAAMTPHDFIEHFLSKMPVAEENKQIIRKHAQTFVALCATDVKFISNPPSMVAAGSVAAAAQGLHLGSANGFLSYHRLTRFLSKVIRCDPDCLRACQEQIEALLESSLRQAQQQNLDPKAAEEEEEEEEVDLACTPTDVRDVNI.

One can recognise a Cyclin N-terminal domain in the interval 28-152 (LRAMLKAEET…VLVNKLKWNL (125 aa)). The interval 264–295 (QQNLDPKAAEEEEEEEEVDLACTPTDVRDVNI) is disordered. A Glycyl lysine isopeptide (Lys-Gly) (interchain with G-Cter in ubiquitin) cross-link involves residue Lys270. Positions 273 to 282 (EEEEEEEEVD) are enriched in acidic residues. Thr286 is subject to Phosphothreonine.

It belongs to the cyclin family. Cyclin D subfamily. In terms of assembly, interacts with either CDK4 or CDK6 protein kinase to form a serine/threonine kinase holoenzyme complex. The cyclin subunit imparts substrate specificity to the complex. Component of the ternary complex CCND1/CDK4/CDKN1B required for nuclear translocation and modulation of CDK4-mediated kinase activity. Interacts directly with CDKN1B. Can form similar complexes with either CDKN1A or CDKN2A. Interacts with UHRF2; the interaction ubiquitinates CCND1 and appears to occur independently of phosphorylation. Interacts with USP2. Interacts (via cyclin N-terminal domain) with INSM1 (via N-terminal region); the interaction competes with the binding of CCND1 to CDK4 during cell cycle progression and inhibits CDK4 activity. Interacts with CDK4; the interaction is prevented with the binding of CCND1 to INSM1 during cell cycle progression. Phosphorylation at Thr-286 by MAP kinases is required for ubiquitination and degradation by the DCX(AMBRA1) complex. It also plays an essential role for recognition by the FBXO31 component of SCF (SKP1-cullin-F-box) protein ligase complex following DNA damage. Post-translationally, ubiquitinated at Lys-270 by the DCX(AMBRA1) complex during the transition from G1 to S cell phase, leading to its degradation: ubiquitination is dependent on Thr-286 phosphorylation. The DCX(AMBRA1) complex represents the major regulator of CCND1 stability during the G1/S transition. Also ubiquitinated by the SCF(FBXO4) and Cul7-RING(FBXW8) ubiquitin-protein ligase complexes. Following DNA damage it is ubiquitinated by the SCF(FBXO31) protein ligase complex. SCF(FBXO31) ubiquitination is dependent on Thr-286 phosphorylation. Ubiquitinated also by UHRF2 apparently in a phosphorylation-independent manner. Ubiquitination leads to its degradation and G1 arrest. Deubiquitinated by USP2; leading to its stabilization.

It localises to the nucleus. Its subcellular location is the cytoplasm. The protein localises to the nucleus membrane. Functionally, regulatory component of the cyclin D1-CDK4 (DC) complex that phosphorylates and inhibits members of the retinoblastoma (RB) protein family including RB1 and regulates the cell-cycle during G(1)/S transition. Phosphorylation of RB1 allows dissociation of the transcription factor E2F from the RB/E2F complex and the subsequent transcription of E2F target genes which are responsible for the progression through the G(1) phase. Hypophosphorylates RB1 in early G(1) phase. Cyclin D-CDK4 complexes are major integrators of various mitogenenic and antimitogenic signals. Also a substrate for SMAD3, phosphorylating SMAD3 in a cell-cycle-dependent manner and repressing its transcriptional activity. Component of the ternary complex, cyclin D1/CDK4/CDKN1B, required for nuclear translocation and activity of the cyclin D-CDK4 complex. Exhibits transcriptional corepressor activity with INSM1 on the NEUROD1 and INS promoters in a cell cycle-independent manner. In Bos taurus (Bovine), this protein is G1/S-specific cyclin-D1 (CCND1).